A 575-amino-acid chain; its full sequence is Phosphoenolpyruvate-protein phosphotransferase (575 aa).

H191 serves as the catalytic Tele-phosphohistidine intermediate. Residues R298 and R334 each contribute to the phosphoenolpyruvate site. The Mg(2+) site is built by E435 and D459. Residues 458–459 and R469 contribute to the phosphoenolpyruvate site; that span reads ND. The active-site Proton donor is C506.

Belongs to the PEP-utilizing enzyme family. As to quaternary structure, homodimer. The cofactor is Mg(2+).

It is found in the cytoplasm. The enzyme catalyses L-histidyl-[protein] + phosphoenolpyruvate = N(pros)-phospho-L-histidyl-[protein] + pyruvate. Its function is as follows. General (non sugar-specific) component of the phosphoenolpyruvate-dependent sugar phosphotransferase system (sugar PTS). This major carbohydrate active-transport system catalyzes the phosphorylation of incoming sugar substrates concomitantly with their translocation across the cell membrane. Enzyme I transfers the phosphoryl group from phosphoenolpyruvate (PEP) to the phosphoryl carrier protein (HPr). The protein is Phosphoenolpyruvate-protein phosphotransferase (ptsI) of Lactococcus lactis subsp. lactis (strain IL1403) (Streptococcus lactis).